The chain runs to 221 residues: Large ribosomal subunit protein uL3 (221 aa).

Residues 140 to 160 form a disordered region; the sequence is GGPKTHGSGFHRHAGSIGMRS.

This sequence belongs to the universal ribosomal protein uL3 family. In terms of assembly, part of the 50S ribosomal subunit. Forms a cluster with proteins L14 and L19.

One of the primary rRNA binding proteins, it binds directly near the 3'-end of the 23S rRNA, where it nucleates assembly of the 50S subunit. The protein is Large ribosomal subunit protein uL3 of Chlamydia caviae (strain ATCC VR-813 / DSM 19441 / 03DC25 / GPIC) (Chlamydophila caviae).